Here is a 259-residue protein sequence, read N- to C-terminus: Hydroxyacylglutathione hydrolase (259 aa).

Positions 56, 58, 60, 61, 112, 133, and 171 each coordinate Zn(2+).

It belongs to the metallo-beta-lactamase superfamily. Glyoxalase II family. Monomer. Zn(2+) is required as a cofactor.

It catalyses the reaction an S-(2-hydroxyacyl)glutathione + H2O = a 2-hydroxy carboxylate + glutathione + H(+). It functions in the pathway secondary metabolite metabolism; methylglyoxal degradation; (R)-lactate from methylglyoxal: step 2/2. Its function is as follows. Thiolesterase that catalyzes the hydrolysis of S-D-lactoyl-glutathione to form glutathione and D-lactic acid. This is Hydroxyacylglutathione hydrolase from Pseudomonas entomophila (strain L48).